We begin with the raw amino-acid sequence, 43 residues long: Protein PsbN (43 aa).

The helical transmembrane segment at 7-29 (VAIFLSGLLVSFTGYALYTAFGQ) threads the bilayer.

It belongs to the PsbN family.

The protein resides in the plastid. It localises to the chloroplast thylakoid membrane. Functionally, may play a role in photosystem I and II biogenesis. The chain is Protein PsbN from Draba nemorosa (Woodland whitlowgrass).